The chain runs to 365 residues: GTPase Obg (365 aa).

The region spanning 1 to 159 is the Obg domain; it reads MKFIDEARIE…RMLKLELKVL (159 aa). Positions 160–334 constitute an OBG-type G domain; that stretch reads ADVGLLGMPN…LIYAIKDHLQ (175 aa). Residues 166 to 173, 191 to 195, 213 to 216, 284 to 287, and 315 to 317 each bind GTP; these read GMPNAGKS, FTTLH, DIPG, NKLD, and SAL. The Mg(2+) site is built by Ser-173 and Thr-193.

It belongs to the TRAFAC class OBG-HflX-like GTPase superfamily. OBG GTPase family. As to quaternary structure, monomer. It depends on Mg(2+) as a cofactor.

Its subcellular location is the cytoplasm. Its function is as follows. An essential GTPase which binds GTP, GDP and possibly (p)ppGpp with moderate affinity, with high nucleotide exchange rates and a fairly low GTP hydrolysis rate. Plays a role in control of the cell cycle, stress response, ribosome biogenesis and in those bacteria that undergo differentiation, in morphogenesis control. The protein is GTPase Obg of Cupriavidus necator (strain ATCC 17699 / DSM 428 / KCTC 22496 / NCIMB 10442 / H16 / Stanier 337) (Ralstonia eutropha).